Reading from the N-terminus, the 325-residue chain is DNA repair and recombination protein RadA (325 aa).

107–114 (GEFGSGKT) provides a ligand contact to ATP.

This sequence belongs to the eukaryotic RecA-like protein family.

In terms of biological role, involved in DNA repair and in homologous recombination. Binds and assemble on single-stranded DNA to form a nucleoprotein filament. Hydrolyzes ATP in a ssDNA-dependent manner and promotes DNA strand exchange between homologous DNA molecules. This Methanococcoides burtonii (strain DSM 6242 / NBRC 107633 / OCM 468 / ACE-M) protein is DNA repair and recombination protein RadA.